We begin with the raw amino-acid sequence, 275 residues long: Bis(5'-nucleosyl)-tetraphosphatase, symmetrical (275 aa).

The protein belongs to the Ap4A hydrolase family.

The enzyme catalyses P(1),P(4)-bis(5'-adenosyl) tetraphosphate + H2O = 2 ADP + 2 H(+). Its function is as follows. Hydrolyzes diadenosine 5',5'''-P1,P4-tetraphosphate to yield ADP. The sequence is that of Bis(5'-nucleosyl)-tetraphosphatase, symmetrical from Haemophilus influenzae (strain PittGG).